Reading from the N-terminus, the 870-residue chain is Leucine--tRNA ligase (870 aa).

A 'HIGH' region motif is present at residues 42-52 (PYPSGKLHMGH). A 'KMSKS' region motif is present at residues 629–633 (KMSKS). Lys-632 lines the ATP pocket.

It belongs to the class-I aminoacyl-tRNA synthetase family.

Its subcellular location is the cytoplasm. It carries out the reaction tRNA(Leu) + L-leucine + ATP = L-leucyl-tRNA(Leu) + AMP + diphosphate. This is Leucine--tRNA ligase from Azotobacter vinelandii (strain DJ / ATCC BAA-1303).